The following is a 357-amino-acid chain: MKNKYYPLRSSMDEMSAKNDNEIDLEKGPLPEYNSEDGSTLPPYSEIWKYIKTVSEDSSTGPTETTNPNVERRQEFKDSHPNIYSLLRLLISVLAVIVVFFTAWVCVNPLEKSIFGKVAFFVTIGITCPILLITIFCFFETWTQAVAQCIKVTVIFLAQCVKVTVISLAKCVKVTAISLAKCVKVTAVGLYNSREKWVVIIWLLWVVICYTLFLRSKFGNLNLNKALICSTCSISAALLLFLLYVRLPFWTLKHMFSGLFQVLGVQSCVVIVTKGLMHLFDKHIDATGYEIEASSLFVIGNFLFFYEMECPGALRRMPKSIRNGIASFLEGTGKAIRGANDNNNNIPLEETEAESEV.

The disordered stretch occupies residues 1 to 39 (MKNKYYPLRSSMDEMSAKNDNEIDLEKGPLPEYNSEDGS). The segment covering 11–29 (SMDEMSAKNDNEIDLEKGP) has biased composition (basic and acidic residues). 7 helical membrane-spanning segments follow: residues 89–109 (LLISVLAVIVVFFTAWVCVNP), 119–139 (AFFVTIGITCPILLITIFCFF), 149–169 (CIKVTVIFLAQCVKVTVISLA), 198–218 (VVIIWLLWVVICYTLFLRSKF), 232–252 (CSISAALLLFLLYVRLPFWTL), 256–276 (FSGLFQVLGVQSCVVIVTKGL), and 286–306 (ATGYEIEASSLFVIGNFLFFY).

This sequence belongs to the WTF family. Homomer. Forms protein aggregates. The two isoforms can interact with each other and with themselves. High sequence similarity is required for their interaction.

Its subcellular location is the spore membrane. It localises to the vacuole membrane. The protein resides in the ascus epiplasm. It is found in the cytoplasm. The protein localises to the endoplasmic reticulum membrane. Promotes unequal transmission of alleles from the parental zygote to progeny spores by acting as poison/antidote system where the poison and antidote proteins are produced from the same locus; the poison component is trans-acting and targets all spores within an ascus whereas the antidote component is spore-specific, leading to poisoning of all progeny that do not inherit the allele. Functionally, localizes isoform 2 to the vacuole thereby facilitating its degradation. Its function is as follows. Forms toxic aggregates that disrupt spore maturation. This is Meiotic driver wtf9 from Schizosaccharomyces kambucha (Fission yeast).